The following is a 289-amino-acid chain: Geranylgeranyl diphosphate synthase (289 aa).

Isopentenyl diphosphate is bound by residues Arg43 and His73. Mg(2+) is bound by residues Asp80 and Asp86. Position 91 (Arg91) interacts with (2E,6E)-farnesyl diphosphate. Isopentenyl diphosphate is bound at residue Arg92. (2E,6E)-farnesyl diphosphate is bound by residues Lys170, Thr171, and Gln205.

The protein belongs to the FPP/GGPP synthase family. Mg(2+) is required as a cofactor.

It carries out the reaction isopentenyl diphosphate + (2E,6E)-farnesyl diphosphate = (2E,6E,10E)-geranylgeranyl diphosphate + diphosphate. It functions in the pathway isoprenoid biosynthesis; geranylgeranyl diphosphate biosynthesis; geranylgeranyl diphosphate from farnesyl diphosphate and isopentenyl diphosphate: step 1/1. In terms of biological role, catalyzes the condensation of farnesyl diphosphate (FPP) and isopentenyl diphosphate (IPP) to yield geranylgeranyl diphosphate (GGPP) needed for biosynthesis of carotenoids and diterpenes. This Rhodobacter capsulatus (strain ATCC BAA-309 / NBRC 16581 / SB1003) protein is Geranylgeranyl diphosphate synthase (crtE).